The following is a 404-amino-acid chain: Zinc finger CCCH domain-containing protein 3 (404 aa).

5 consecutive C3H1-type zinc fingers follow at residues 47-75, 90-118, 135-163, 261-289, and 307-335; these read RPGE…HPTH, RIGQ…HPKD, RLGE…HPQP, SSDQ…HPGV, and RPGQ…HPML. The span at 350-374 shows a compositional bias: polar residues; the sequence is FASPVTTHQRISPTPNRSDSKSLSN. Residues 350 to 404 form a disordered region; that stretch reads FASPVTTHQRISPTPNRSDSKSLSNGKPDVKKESSETEKPDNGEVQDLSEDASSP. Residues 377–391 show a composition bias toward basic and acidic residues; sequence PDVKKESSETEKPDN.

The protein resides in the nucleus. Possesses RNA-binding and ribonuclease activities in vitro. The sequence is that of Zinc finger CCCH domain-containing protein 3 from Arabidopsis thaliana (Mouse-ear cress).